Reading from the N-terminus, the 871-residue chain is Protein argonaute-2 (871 aa).

Residues 232 to 351 (PVIEFMCEVL…LPLEVCNIVA (120 aa)) form the PAZ domain. Interaction with guide RNA stretches follow at residues 314-319 (YFKDRH) and 536-578 (GKTP…LCLK). In terms of domain architecture, Piwi spans 529-830 (LVVVILPGKT…VAFRARYHLV (302 aa)). The tract at residues 599–602 (FQQP) is interaction with GW182 family members. An a divalent metal cation-binding site is contributed by D609. An interaction with GW182 family members region spans residues 662 to 672 (LIQFYKSTRFK). Residue D681 participates in a divalent metal cation binding. 3 interaction with guide RNA regions span residues 721-722 (KR), 765-773 (HAGIQGTSR), and 802-824 (YVRC…VAFR). H819 provides a ligand contact to a divalent metal cation. A disordered region spans residues 834-856 (HDSAEGSHTSGQSNGRDQQALAK). Residues 839-850 (GSHTSGQSNGRD) are compositionally biased toward polar residues.

This sequence belongs to the argonaute family. Ago subfamily. In terms of assembly, component of the RISC loading complex (RLC), or micro-RNA (miRNA) loading complex (miRLC), which is composed of dicer1, ago2 and tarbp2. Note that the trimeric RLC/miRLC is also referred to as RISC. It depends on Mg(2+) as a cofactor. Mn(2+) serves as cofactor.

The protein localises to the cytoplasm. It is found in the P-body. It carries out the reaction Endonucleolytic cleavage to 5'-phosphomonoester.. In terms of biological role, required for RNA-mediated gene silencing (RNAi) by the RNA-induced silencing complex (RISC). The 'minimal RISC' appears to include ago2 bound to a short guide RNA such as a microRNA (miRNA) or short interfering RNA (siRNA). These guide RNAs direct RISC to complementary mRNAs that are targets for RISC-mediated gene silencing. The precise mechanism of gene silencing depends on the degree of complementarity between the miRNA or siRNA and its target. Binding of RISC to a perfectly complementary mRNA generally results in silencing due to endonucleolytic cleavage of the mRNA specifically by ago2. Binding of RISC to a partially complementary mRNA results in silencing through inhibition of translation, and this is independent of endonuclease activity. The inhibition of translational initiation leads to the accumulation of the affected mRNA in cytoplasmic processing bodies (P-bodies), where mRNA degradation may subsequently occur. The sequence is that of Protein argonaute-2 (ago2) from Xenopus tropicalis (Western clawed frog).